The chain runs to 323 residues: Aldo-keto reductase family 1 member C3 (323 aa).

Residues 20-24 (GFGTY) and Asp-50 each bind NADP(+). Tyr-55 functions as the Proton donor in the catalytic mechanism. Residue His-117 coordinates substrate. NADP(+) contacts are provided by residues 166–167 (SN), Gln-190, 216–221 (YSALGS), and 270–280 (KSYNEQRIREN).

This sequence belongs to the aldo/keto reductase family.

The protein localises to the cytoplasm. The enzyme catalyses a 3alpha-hydroxysteroid + NADP(+) = a 3-oxosteroid + NADPH + H(+). The catalysed reaction is a 3alpha-hydroxysteroid + NAD(+) = a 3-oxosteroid + NADH + H(+). It catalyses the reaction prostaglandin F2alpha + NADP(+) = prostaglandin D2 + NADPH + H(+). It carries out the reaction testosterone + NAD(+) = androst-4-ene-3,17-dione + NADH + H(+). The enzyme catalyses testosterone + NADP(+) = androst-4-ene-3,17-dione + NADPH + H(+). The catalysed reaction is prostaglandin F2alpha + NADP(+) = prostaglandin H2 + NADPH + H(+). It catalyses the reaction prostaglandin D2 + NADPH + H(+) = 11beta-prostaglandin F2 + NADP(+). It carries out the reaction prostaglandin D2-ethanolamide + NADPH + H(+) = 11beta-prostaglandin F2-ethanolamide + NADP(+). The enzyme catalyses 17beta-estradiol + NADP(+) = estrone + NADPH + H(+). The catalysed reaction is 17beta-estradiol + NAD(+) = estrone + NADH + H(+). It catalyses the reaction (20S)-hydroxypregn-4-en-3-one + NADP(+) = progesterone + NADPH + H(+). It carries out the reaction (20S)-hydroxypregn-4-en-3-one + NAD(+) = progesterone + NADH + H(+). The enzyme catalyses 5alpha-androstane-3alpha,17beta-diol + NADP(+) = 17beta-hydroxy-5alpha-androstan-3-one + NADPH + H(+). The catalysed reaction is 5alpha-androstane-3alpha,17beta-diol + NAD(+) = 17beta-hydroxy-5alpha-androstan-3-one + NADH + H(+). It catalyses the reaction androsterone + NADPH + H(+) = 5alpha-androstane-3alpha,17beta-diol + NADP(+). It carries out the reaction 5alpha-androstane-3alpha,17beta-diol + NAD(+) = androsterone + NADH + H(+). The enzyme catalyses 5alpha-androstane-3beta,17beta-diol + NADP(+) = 17beta-hydroxy-5alpha-androstan-3-one + NADPH + H(+). The catalysed reaction is 9-cis-retinol + NADP(+) = 9-cis-retinal + NADPH + H(+). It participates in steroid metabolism. Functionally, cytosolic aldo-keto reductase that catalyzes the NADH and NADPH-dependent reduction of ketosteroids to hydroxysteroids. Acts as a NAD(P)(H)-dependent 3-, 17- and 20-ketosteroid reductase on the steroid nucleus and side chain and regulates the metabolism of androgens, estrogens and progesterone. Displays the ability to catalyze both oxidation and reduction in vitro, but most probably acts as a reductase in vivo since the oxidase activity measured in vitro is inhibited by physiological concentration of NADPH. Acts preferentially as a 17-ketosteroid reductase and has the highest catalytic efficiency of the AKR1C enzyme for the reduction of delta4-androstenedione to form testosterone. Reduces prostaglandin (PG) D2 to 11beta-prostaglandin F2, progesterone to 20alpha-hydroxyprogesterone and estrone to 17beta-estradiol. Catalyzes the transformation of the potent androgen dihydrotestosterone (DHT) into the less active form, 5-alpha-androstan-3-alpha,17-beta-diol (3-alpha-diol). Also displays retinaldehyde reductase activity toward 9-cis-retinal. The chain is Aldo-keto reductase family 1 member C3 (AKR1C3) from Pongo abelii (Sumatran orangutan).